The sequence spans 216 residues: DNA-directed RNA polymerase subunit alpha (216 aa).

The protein belongs to the RNA polymerase alpha chain family. In terms of assembly, in plastids the minimal PEP RNA polymerase catalytic core is composed of four subunits: alpha, beta, beta', and beta''. When a (nuclear-encoded) sigma factor is associated with the core the holoenzyme is formed, which can initiate transcription.

It is found in the plastid. The protein localises to the chloroplast. The catalysed reaction is RNA(n) + a ribonucleoside 5'-triphosphate = RNA(n+1) + diphosphate. Its function is as follows. DNA-dependent RNA polymerase catalyzes the transcription of DNA into RNA using the four ribonucleoside triphosphates as substrates. This is DNA-directed RNA polymerase subunit alpha (rpoA) from Euglena granulata.